The primary structure comprises 182 residues: Adenine phosphoribosyltransferase (182 aa).

It belongs to the purine/pyrimidine phosphoribosyltransferase family. In terms of assembly, homodimer.

It is found in the cytoplasm. The enzyme catalyses AMP + diphosphate = 5-phospho-alpha-D-ribose 1-diphosphate + adenine. The protein operates within purine metabolism; AMP biosynthesis via salvage pathway; AMP from adenine: step 1/1. Catalyzes a salvage reaction resulting in the formation of AMP, that is energically less costly than de novo synthesis. The polypeptide is Adenine phosphoribosyltransferase (Campylobacter curvus (strain 525.92)).